Reading from the N-terminus, the 540-residue chain is Chaperonin GroEL (540 aa).

Residues 30–33 (TLGP), lysine 51, 87–91 (DGTTT), glycine 415, and aspartate 495 contribute to the ATP site.

Belongs to the chaperonin (HSP60) family. Forms a cylinder of 14 subunits composed of two heptameric rings stacked back-to-back. Interacts with the co-chaperonin GroES.

It localises to the cytoplasm. The catalysed reaction is ATP + H2O + a folded polypeptide = ADP + phosphate + an unfolded polypeptide.. Its function is as follows. Together with its co-chaperonin GroES, plays an essential role in assisting protein folding. The GroEL-GroES system forms a nano-cage that allows encapsulation of the non-native substrate proteins and provides a physical environment optimized to promote and accelerate protein folding. The polypeptide is Chaperonin GroEL (Serratia ficaria).